We begin with the raw amino-acid sequence, 857 residues long: DNA mismatch repair protein MutS (857 aa).

Residue 613–620 (GPNMGGKS) coordinates ATP. The disordered stretch occupies residues 797–820 (TSLPHEQPAAHKAKDAPQVPHQSD).

Belongs to the DNA mismatch repair MutS family.

Its function is as follows. This protein is involved in the repair of mismatches in DNA. It is possible that it carries out the mismatch recognition step. This protein has a weak ATPase activity. This Pseudomonas putida (strain ATCC 47054 / DSM 6125 / CFBP 8728 / NCIMB 11950 / KT2440) protein is DNA mismatch repair protein MutS.